Here is a 172-residue protein sequence, read N- to C-terminus: NADH-quinone oxidoreductase subunit B 1 (172 aa).

C42, C43, C107, and C137 together coordinate [4Fe-4S] cluster.

Belongs to the complex I 20 kDa subunit family. As to quaternary structure, NDH-1 is composed of 14 different subunits. Subunits NuoB, C, D, E, F, and G constitute the peripheral sector of the complex. It depends on [4Fe-4S] cluster as a cofactor.

It localises to the cell inner membrane. It catalyses the reaction a quinone + NADH + 5 H(+)(in) = a quinol + NAD(+) + 4 H(+)(out). Functionally, NDH-1 shuttles electrons from NADH, via FMN and iron-sulfur (Fe-S) centers, to quinones in the respiratory chain. Couples the redox reaction to proton translocation (for every two electrons transferred, four hydrogen ions are translocated across the cytoplasmic membrane), and thus conserves the redox energy in a proton gradient. This chain is NADH-quinone oxidoreductase subunit B 1, found in Anaeromyxobacter sp. (strain Fw109-5).